The sequence spans 350 residues: GTPase Obg (350 aa).

Positions 1 to 159 constitute an Obg domain; sequence MRFIDQTEIF…FRLHLELKLL (159 aa). Positions 160–328 constitute an OBG-type G domain; it reads AEVGIIGLPN…LLQQVWEELD (169 aa). GTP is bound by residues 166–173, 191–195, 213–216, 280–283, and 309–311; these read GLPNAGKS, FTTLI, DIPG, NKID, and SAV. 2 residues coordinate Mg(2+): serine 173 and threonine 193.

Belongs to the TRAFAC class OBG-HflX-like GTPase superfamily. OBG GTPase family. As to quaternary structure, monomer. It depends on Mg(2+) as a cofactor.

It localises to the cytoplasm. An essential GTPase which binds GTP, GDP and possibly (p)ppGpp with moderate affinity, with high nucleotide exchange rates and a fairly low GTP hydrolysis rate. Plays a role in control of the cell cycle, stress response, ribosome biogenesis and in those bacteria that undergo differentiation, in morphogenesis control. The chain is GTPase Obg from Acaryochloris marina (strain MBIC 11017).